We begin with the raw amino-acid sequence, 234 residues long: MQLITTENKLAGSKKALEIIEKGITTGEVNTLGLATGSTPETLYAELVKSDVDTTNVTTTNLDEYVGLAASDPNSYHYYMNNLLFSKKAFKESFLPNGEATDAEAECARYEEILTEHPIDIQVLGIGTNGHIGFNEPGTSFDSLTHKVVLTDSTREANKRFFEREEDVPTHAYSMGIKSIMNAKKIILLAFGENKAQAIKETIKGPVDVNCPASVLQNHPDVTVILDNEAASLL.

The Proton acceptor; for enolization step role is filled by Asp63. Asn129 serves as the catalytic For ring-opening step. The active-site Proton acceptor; for ring-opening step is the His131. The active-site For ring-opening step is Glu136.

The protein belongs to the glucosamine/galactosamine-6-phosphate isomerase family. NagB subfamily.

It carries out the reaction alpha-D-glucosamine 6-phosphate + H2O = beta-D-fructose 6-phosphate + NH4(+). The protein operates within amino-sugar metabolism; N-acetylneuraminate degradation; D-fructose 6-phosphate from N-acetylneuraminate: step 5/5. Functionally, catalyzes the reversible isomerization-deamination of glucosamine 6-phosphate (GlcN6P) to form fructose 6-phosphate (Fru6P) and ammonium ion. In Listeria welshimeri serovar 6b (strain ATCC 35897 / DSM 20650 / CCUG 15529 / CIP 8149 / NCTC 11857 / SLCC 5334 / V8), this protein is Glucosamine-6-phosphate deaminase.